A 299-amino-acid polypeptide reads, in one-letter code: RGGGRGGPRGGGRGRGPGRGRGFNQESADDENAFGSNNGFSGRYRVQEDGESGKLSERRGGYGGPRGGFHGGRRGGFNNGDAAEGEGERPRRVFDRRSGTGRGNEYIKREGSGRGNWGTPADDIAQETEVPVNDGEKIVEAEKEAGQEEAEDTNKDSTAAEPEEKEPEEKEMTLEEYEKLMEEKRKALLALKPEERKVNLDKELESMQLLSNKKNDDEIFIKLGSEKEKRKEAVEKARKTQSINEFLKPAEGENYSRRGGRGRGPGRGRGGFGGGVGGNKSFSAPSIEDVGQFPSLVAK.

Residues 1–21 (RGGGRGGPRGGGRGRGPGRGR) are compositionally biased toward gly residues. Disordered regions lie at residues 1-173 (RGGG…KEMT) and 232-299 (EAVE…LVAK). The segment covering 45–60 (RVQEDGESGKLSERRG) has biased composition (basic and acidic residues). Over residues 61 to 78 (GYGGPRGGFHGGRRGGFN) the composition is skewed to gly residues. Composition is skewed to basic and acidic residues over residues 86-98 (EGER…DRRS) and 134-146 (DGEK…KEAG). Positions 88 to 98 (ERPRRVFDRRS) match the Arginine-rich RNA-binding motif E-R-P-R-R-X-[F/Y]-[E/D]-R-R-S motif. The span at 267 to 278 (RGRGGFGGGVGG) shows a compositional bias: gly residues.

Belongs to the SERBP1-HABP4 family. In terms of tissue distribution, expressed in seedlings but not in roots.

It localises to the nucleus. It is found in the cytoplasm. The protein localises to the perinuclear region. In terms of biological role, ribosome-binding protein that acts as a regulator of mRNA translation by promoting ribosome inactivation. Binds RNA. In Nicotiana tabacum (Common tobacco), this protein is RGG repeats nuclear RNA binding protein A.